We begin with the raw amino-acid sequence, 880 residues long: Interference hedgehog (880 aa).

The first 20 residues, 1 to 20 (MTLLTSSLLLFSLLTSRLEA), serve as a signal peptide directing secretion. Residues 21–703 (IPVLEKSPAH…ETFNMSPMLT (683 aa)) are Extracellular-facing. Ig-like C2-type domains follow at residues 45 to 142 (PGVR…TARL), 132 to 232 (PLVV…ERIQ), 252 to 340 (PHLL…YIKV), and 346 to 432 (PQIV…LQVN). 4 disulfides stabilise this stretch: cysteine 68/cysteine 126, cysteine 173/cysteine 220, cysteine 276/cysteine 324, and cysteine 367/cysteine 414. 2 N-linked (GlcNAc...) asparagine glycosylation sites follow: asparagine 102 and asparagine 209. The disordered stretch occupies residues 426–467 (GTLLQVNPKQIQEPRESGGTHRPKPNQGSKQKQMYPPTPPNV). Fibronectin type-III domains are found at residues 461–567 (PPTP…LQPG) and 575–670 (VPEL…TQRP). Asparagine 466 carries N-linked (GlcNAc...) asparagine glycosylation. Heparin contacts are provided by arginine 497, lysine 501, lysine 503, and arginine 541. The N-linked (GlcNAc...) asparagine glycan is linked to asparagine 557. Positions 662–697 (LKQGRTQRPKTSTTEEPTLQMGDRDTTTPSHNETFN) are disordered. Composition is skewed to polar residues over residues 665 to 678 (GRTQRPKTSTTEEP) and 688 to 697 (TTPSHNETFN). Asparagine 693 is a glycosylation site (N-linked (GlcNAc...) asparagine). A helical transmembrane segment spans residues 704–724 (GTIGGGAVLILLLISTCLCVC). Over 725 to 880 (RRRTSRSRGN…SSGSLNSVGV (156 aa)) the chain is Cytoplasmic. Disordered regions lie at residues 728–762 (TSRSRGNNPNKPRMAELRDDFVPLGNCSPTKQRQR) and 775–880 (QQQQ…SVGV). 2 stretches are compositionally biased toward low complexity: residues 823-837 (RAGGSNGSNNGNNNN) and 864-880 (SSRSENLSSGSLNSVGV).

The protein belongs to the immunoglobulin superfamily. IHOG family. As to quaternary structure, homodimer. Heterotetramer; 2 iHog chains bind 2 hh chains when facilitated by heparin, heparin is required to promote high-affinity interactions between hh and iHog.

The protein resides in the membrane. Functionally, mediates response to the active Hedgehog (Hh) protein signal in embryos, functioning upstream or at the level of patched (ptc). This chain is Interference hedgehog, found in Drosophila sechellia (Fruit fly).